We begin with the raw amino-acid sequence, 742 residues long: ATP-dependent RNA helicase DBP7 (742 aa).

A disordered region spans residues 45-100 (GKTVSRKRKANTTGDEGIIPGRGENSIKKLHKESSYSSEEQEKYKGRNAHNTQGRT). The Q motif signature appears at 143–172 (DQFASLGVSSLLVSHLEQKMRIKKPTSIQK). The region spanning 178–372 (IIGNAGKNDF…NVALKDYKLI (195 aa)) is the Helicase ATP-binding domain. 191 to 198 (AQTGSGKT) is a binding site for ATP. The DEGD box signature appears at 307–310 (DEGD). Residues 405 to 605 (TLAATLNNIT…ILMPAFKDVN (201 aa)) enclose the Helicase C-terminal domain. The segment at 701-726 (AMGLQSSKDGNSEKKPTKENSKNKMF) is disordered. Residues 710–722 (GNSEKKPTKENSK) are compositionally biased toward basic and acidic residues.

Belongs to the DEAD box helicase family. DDX31/DBP7 subfamily.

It is found in the nucleus. The protein localises to the nucleolus. The catalysed reaction is ATP + H2O = ADP + phosphate + H(+). Functionally, ATP-binding RNA helicase involved in the biogenesis of 60S ribosomal subunits and is required for the normal formation of 25S and 5.8S rRNAs. This is ATP-dependent RNA helicase DBP7 (DBP7) from Saccharomyces cerevisiae (strain ATCC 204508 / S288c) (Baker's yeast).